A 96-amino-acid polypeptide reads, in one-letter code: uncharacterized protein (96 aa).

This sequence belongs to the NifU family.

This is an uncharacterized protein from Azotobacter vinelandii.